The following is a 205-amino-acid chain: Putative 3-methyladenine DNA glycosylase (205 aa).

It belongs to the DNA glycosylase MPG family.

This is Putative 3-methyladenine DNA glycosylase from Bacillus anthracis (strain A0248).